A 752-amino-acid polypeptide reads, in one-letter code: Myb-related protein A (752 aa).

Positions 1-22 (MAKRSRSEDEDDDLQYADHDYE) are disordered. 3 HTH myb-type domains span residues 30 to 81 (KKLW…QKVL), 82 to 137 (NPEL…NPEV), and 138 to 188 (KKSS…RRKV). DNA-binding regions (H-T-H motif) lie at residues 58 to 81 (WTLI…QKVL), 110 to 133 (WSLI…HNHL), and 161 to 184 (WAEI…NSTM). A Glycyl lysine isopeptide (Lys-Gly) (interchain with G-Cter in SUMO2) cross-link involves residue Lys199. The transcriptional activation domain stretch occupies residues 230–295 (IPGYQYVSPE…RIPSQPGSFS (66 aa)). Residues 298–553 (SGSFLMDDNM…IRRSILGTTP (256 aa)) form a negative regulatory domain region. Lys394 bears the N6-acetyllysine mark. A disordered region spans residues 451 to 480 (RKMRVGHSPGSELRDGSLNDGGNMALKHTP). Glycyl lysine isopeptide (Lys-Gly) (interchain with G-Cter in SUMO2) cross-links involve residues Lys592 and Lys602.

Component of the DREAM complex (also named LINC complex) at least composed of E2F4, E2F5, LIN9, LIN37, LIN52, LIN54, MYBL1, MYBL2, RBL1, RBL2, RBBP4, TFDP1 and TFDP2. The complex exists in quiescent cells where it represses cell cycle-dependent genes. It dissociates in S phase when LIN9, LIN37, LIN52 and LIN54 form a subcomplex that binds to MYBL2. In terms of tissue distribution, expressed in a variety of lymphoid and solid tumor lines cultured in vitro.

The protein resides in the nucleus. Its function is as follows. Transcription factor that specifically recognizes the sequence 5'-YAAC[GT]G-3'. Acts as a master regulator of male meiosis by promoting expression of piRNAs: activates expression of both piRNA precursor RNAs and expression of protein-coding genes involved in piRNA metabolism. The piRNA metabolic process mediates the repression of transposable elements during meiosis by forming complexes composed of piRNAs and Piwi proteins and governs the methylation and subsequent repression of transposons, which is essential for the germline integrity. Transcriptional activator of SOX30. The chain is Myb-related protein A (MYBL1) from Homo sapiens (Human).